The following is a 236-amino-acid chain: WUSCHEL-related homeobox 4 (236 aa).

The homeobox; WUS-type DNA-binding region spans 88 to 152; sequence AGTTRWNPSA…NHKARERQKQ (65 aa). Residues 169 to 188 form a disordered region; it reads PATANETKEAPEKKEKDVED. Positions 174-187 are enriched in basic and acidic residues; sequence ETKEAPEKKEKDVE.

The protein belongs to the WUS homeobox family.

It is found in the nucleus. Transcription factor which may be involved in developmental processes. The chain is WUSCHEL-related homeobox 4 (WOX4) from Oryza sativa subsp. indica (Rice).